The chain runs to 311 residues: Probable manganese-dependent inorganic pyrophosphatase (311 aa).

Mn(2+) contacts are provided by His-9, Asp-13, Asp-15, Asp-77, His-99, and Asp-151.

This sequence belongs to the PPase class C family. It depends on Mn(2+) as a cofactor.

Its subcellular location is the cytoplasm. It carries out the reaction diphosphate + H2O = 2 phosphate + H(+). The polypeptide is Probable manganese-dependent inorganic pyrophosphatase (Streptococcus agalactiae serotype III (strain NEM316)).